Consider the following 313-residue polypeptide: Ribosomal RNA small subunit methyltransferase H (313 aa).

Residues 35-37 (GGH), Asp-55, Phe-79, Asp-101, and Gln-108 each bind S-adenosyl-L-methionine.

The protein belongs to the methyltransferase superfamily. RsmH family.

The protein resides in the cytoplasm. The catalysed reaction is cytidine(1402) in 16S rRNA + S-adenosyl-L-methionine = N(4)-methylcytidine(1402) in 16S rRNA + S-adenosyl-L-homocysteine + H(+). In terms of biological role, specifically methylates the N4 position of cytidine in position 1402 (C1402) of 16S rRNA. The sequence is that of Ribosomal RNA small subunit methyltransferase H from Musicola paradisiaca (strain Ech703) (Dickeya paradisiaca).